Here is a 678-residue protein sequence, read N- to C-terminus: Photosystem I P700 chlorophyll a apoprotein A1 (678 aa).

Transmembrane regions (helical) follow at residues 75–98 (VFAA…FHGA), 152–175 (LKVI…FHMH), 192–216 (STHH…HISL), 266–284 (SAMH…SVLG), 302–325 (WHLV…QMSN), 341–367 (VSLF…IGLV), 384–406 (IILG…LYVH), and 458–476 (FMVT…LILV). The [4Fe-4S] cluster site is built by Cys500 and Cys509. Transmembrane regions (helical) follow at residues 516–537 (HVFL…HFFW) and 591–613 (LAAY…MFLF). His602 is a binding site for chlorophyll a'. The chlorophyll a site is built by Met610 and Tyr618. Residue Trp619 coordinates phylloquinone. A helical membrane pass occupies residues 651–671 (AVGFTHYLLGGIGSTWSFFLA).

Belongs to the PsaA/PsaB family. In terms of assembly, the PsaA/B heterodimer binds the P700 chlorophyll special pair and subsequent electron acceptors. PSI consists of a core antenna complex that captures photons, and an electron transfer chain that converts photonic excitation into a charge separation. The eukaryotic PSI reaction center is composed of at least 11 subunits. The cofactor is P700 is a chlorophyll a/chlorophyll a' dimer, A0 is one or more chlorophyll a, A1 is one or both phylloquinones and FX is a shared 4Fe-4S iron-sulfur center..

Its subcellular location is the plastid. It is found in the chloroplast thylakoid membrane. It catalyses the reaction reduced [plastocyanin] + hnu + oxidized [2Fe-2S]-[ferredoxin] = oxidized [plastocyanin] + reduced [2Fe-2S]-[ferredoxin]. Functionally, psaA and PsaB bind P700, the primary electron donor of photosystem I (PSI), as well as the electron acceptors A0, A1 and FX. PSI is a plastocyanin/cytochrome c6-ferredoxin oxidoreductase, converting photonic excitation into a charge separation, which transfers an electron from the donor P700 chlorophyll pair to the spectroscopically characterized acceptors A0, A1, FX, FA and FB in turn. Oxidized P700 is reduced on the lumenal side of the thylakoid membrane by plastocyanin or cytochrome c6. This Amphidinium carterae (Dinoflagellate) protein is Photosystem I P700 chlorophyll a apoprotein A1.